We begin with the raw amino-acid sequence, 1250 residues long: DNA-directed RNA polymerase subunit beta (1250 aa).

The tract at residues 1215-1250 is disordered; the sequence is QDLNDDDINPDDTIDAELDDNLFDDDFDDTFDDDDL.

It belongs to the RNA polymerase beta chain family. In terms of assembly, the RNAP catalytic core consists of 2 alpha, 1 beta, 1 beta' and 1 omega subunit. When a sigma factor is associated with the core the holoenzyme is formed, which can initiate transcription.

The enzyme catalyses RNA(n) + a ribonucleoside 5'-triphosphate = RNA(n+1) + diphosphate. Functionally, DNA-dependent RNA polymerase catalyzes the transcription of DNA into RNA using the four ribonucleoside triphosphates as substrates. In Acetivibrio thermocellus (strain ATCC 27405 / DSM 1237 / JCM 9322 / NBRC 103400 / NCIMB 10682 / NRRL B-4536 / VPI 7372) (Clostridium thermocellum), this protein is DNA-directed RNA polymerase subunit beta.